The following is a 115-amino-acid chain: Phosphoribosyl-AMP cyclohydrolase (115 aa).

Mg(2+) is bound at residue aspartate 80. Cysteine 81 contributes to the Zn(2+) binding site. 2 residues coordinate Mg(2+): aspartate 82 and aspartate 84. Positions 97 and 104 each coordinate Zn(2+).

It belongs to the PRA-CH family. In terms of assembly, homodimer. Requires Mg(2+) as cofactor. The cofactor is Zn(2+).

It localises to the cytoplasm. The enzyme catalyses 1-(5-phospho-beta-D-ribosyl)-5'-AMP + H2O = 1-(5-phospho-beta-D-ribosyl)-5-[(5-phospho-beta-D-ribosylamino)methylideneamino]imidazole-4-carboxamide. It participates in amino-acid biosynthesis; L-histidine biosynthesis; L-histidine from 5-phospho-alpha-D-ribose 1-diphosphate: step 3/9. Catalyzes the hydrolysis of the adenine ring of phosphoribosyl-AMP. This is Phosphoribosyl-AMP cyclohydrolase from Mycobacterium avium (strain 104).